A 40-amino-acid chain; its full sequence is Photosystem II reaction center protein J (40 aa).

Residues 8-28 (IPLWLIGTVTGIPVIGLVGIF) form a helical membrane-spanning segment.

The protein belongs to the PsbJ family. As to quaternary structure, PSII is composed of 1 copy each of membrane proteins PsbA, PsbB, PsbC, PsbD, PsbE, PsbF, PsbH, PsbI, PsbJ, PsbK, PsbL, PsbM, PsbT, PsbX, PsbY, PsbZ, Psb30/Ycf12, at least 3 peripheral proteins of the oxygen-evolving complex and a large number of cofactors. It forms dimeric complexes.

It is found in the plastid. It localises to the chloroplast thylakoid membrane. In terms of biological role, one of the components of the core complex of photosystem II (PSII). PSII is a light-driven water:plastoquinone oxidoreductase that uses light energy to abstract electrons from H(2)O, generating O(2) and a proton gradient subsequently used for ATP formation. It consists of a core antenna complex that captures photons, and an electron transfer chain that converts photonic excitation into a charge separation. This is Photosystem II reaction center protein J from Cucumis sativus (Cucumber).